A 274-amino-acid chain; its full sequence is Nitrogenase iron protein (274 aa).

8-15 (GKGGIGKS) serves as a coordination point for ATP. C94 serves as a coordination point for [4Fe-4S] cluster. R97 is subject to ADP-ribosylarginine; by dinitrogenase reductase ADP-ribosyltransferase. Position 131 (C131) interacts with [4Fe-4S] cluster.

It belongs to the NifH/BchL/ChlL family. As to quaternary structure, homodimer. Requires [4Fe-4S] cluster as cofactor. Post-translationally, the reversible ADP-ribosylation of Arg-97 inactivates the nitrogenase reductase and regulates nitrogenase activity.

It catalyses the reaction N2 + 8 reduced [2Fe-2S]-[ferredoxin] + 16 ATP + 16 H2O = H2 + 8 oxidized [2Fe-2S]-[ferredoxin] + 2 NH4(+) + 16 ADP + 16 phosphate + 6 H(+). Functionally, the key enzymatic reactions in nitrogen fixation are catalyzed by the nitrogenase complex, which has 2 components: the iron protein and the molybdenum-iron protein. In Chlorobium luteolum (strain DSM 273 / BCRC 81028 / 2530) (Pelodictyon luteolum), this protein is Nitrogenase iron protein.